Consider the following 159-residue polypeptide: Ribosomal RNA large subunit methyltransferase H (159 aa).

S-adenosyl-L-methionine-binding positions include Leu-76, Gly-108, and 127 to 132; that span reads FSKMTF.

This sequence belongs to the RNA methyltransferase RlmH family. In terms of assembly, homodimer.

The protein localises to the cytoplasm. The catalysed reaction is pseudouridine(1915) in 23S rRNA + S-adenosyl-L-methionine = N(3)-methylpseudouridine(1915) in 23S rRNA + S-adenosyl-L-homocysteine + H(+). Functionally, specifically methylates the pseudouridine at position 1915 (m3Psi1915) in 23S rRNA. The protein is Ribosomal RNA large subunit methyltransferase H of Bifidobacterium adolescentis (strain ATCC 15703 / DSM 20083 / NCTC 11814 / E194a).